The following is a 1104-amino-acid chain: SWI/SNF complex subunit SMARCC1 (1104 aa).

The interval 27-301 is marR-like, BRCT and chromo domains module; sequence LAVYRRKDGG…PVSFRQRIST (275 aa). The region spanning 37 to 163 is the MarR-like domain; sequence PASKFWESPD…IEKTLVQNNC (127 aa). The region spanning 167–210 is the BRCT; N-terminus domain; that stretch reads PNIYLIPDIDLKLANKLKDIIKRHQGTFTDEKSKASHHIYPYPS. K178 participates in a covalent cross-link: Glycyl lysine isopeptide (Lys-Gly) (interchain with G-Cter in SUMO2). The Chromo domain occupies 216–244; sequence EWLRPVMRRDKQVLVHWGFYPDSYDTWVH. In terms of domain architecture, BRCT; C-terminus spans 260–284; the sequence is KPWKVHVKWILDTDVFNEWMNEEDY. The interval 295–445 is disordered; the sequence is FRQRISTKNE…PGEDNVTEQT (151 aa). A compositionally biased stretch (basic and acidic residues) spans 301–317; the sequence is TKNEEPVRSPERRDRKA. A phosphoserine mark is found at S309, S327, and S329. At T334 the chain carries Phosphothreonine. K344 and K345 each carry N6-acetyllysine. S349 is subject to Phosphoserine. An N6-acetyllysine modification is found at K353. S356 carries the post-translational modification Phosphoserine. N6-acetyllysine; alternate is present on K358. Residue K358 forms a Glycyl lysine isopeptide (Lys-Gly) (interchain with G-Cter in SUMO2); alternate linkage. T397 is subject to Phosphothreonine. The SWIRM domain maps to 448-545; sequence IIIPSYASWF…YQVDPESRPM (98 aa). S572 carries the phosphoserine modification. K591 participates in a covalent cross-link: Glycyl lysine isopeptide (Lys-Gly) (interchain with G-Cter in SUMO2). The SANT domain occupies 617 to 668; it reads SAGREWTEQETLLLLEALEMYKDDWNKVSEHVGSRTQDECILHFLRLPIEDP. K738 participates in a covalent cross-link: Glycyl lysine isopeptide (Lys-Gly) (interchain with G-Cter in SUMO2). The segment at 744-859 is disordered; sequence ARASGKVDPT…DAGKKKVEHE (116 aa). A Phosphoserine modification is found at S775. The span at 775 to 784 shows a compositional bias: acidic residues; that stretch reads SEEEKMETDP. Basic and acidic residues predominate over residues 788 to 859; sequence QPEKAENKVE…DAGKKKVEHE (72 aa). K795 is covalently cross-linked (Glycyl lysine isopeptide (Lys-Gly) (interchain with G-Cter in SUMO2)). Phosphoserine occurs at positions 821 and 824. Glycyl lysine isopeptide (Lys-Gly) (interchain with G-Cter in SUMO2) cross-links involve residues K828 and K855. Residues 909-945 are a coiled coil; sequence KLRHFEELETIMDREKEALEQQRQQLLTERQNFHMEQ. K947 carries the N6-acetyllysine modification. Disordered stretches follow at residues 955–1021 and 1041–1104; these read QQME…PGPG and IHPT…SATP. The span at 956–973 shows a compositional bias: low complexity; the sequence is QMEQQQQHGQTPQQAHQH. Pro residues-rich tracts occupy residues 994-1017 and 1048-1057; these read QQPP…PGQI and PTPPGMPPMP. R1064 carries the asymmetric dimethylarginine modification. Residues 1073–1104 are compositionally biased toward pro residues; sequence MYPPPPQQQQPPPPADGVPPPPAPGPPASATP.

The protein belongs to the SMARCC family. As to quaternary structure, component of the multiprotein chromatin-remodeling complexes SWI/SNF: SWI/SNF-A (BAF), SWI/SNF-B (PBAF) and related complexes. The canonical complex contains a catalytic subunit (either SMARCA4/BRG1/BAF190A or SMARCA2/BRM/BAF190B) and at least SMARCE1, ACTL6A/BAF53, SMARCC1/BAF155, SMARCC2/BAF170, and SMARCB1/SNF5/BAF47. Other subunits specific to each of the complexes may also be present permitting several possible combinations developmentally and tissue specific. Component of the BAF complex, which includes at least actin (ACTB), ARID1A/BAF250A, ARID1B/BAF250B, SMARCA2/BRM, SMARCA4/BRG1, ACTL6A/BAF53, ACTL6B/BAF53B, SMARCE1/BAF57, SMARCC1/BAF155, SMARCC2/BAF170, SMARCB1/SNF5/INI1, and one or more SMARCD1/BAF60A, SMARCD2/BAF60B, or SMARCD3/BAF60C. In muscle cells, the BAF complex also contains DPF3. Component of neural progenitors-specific chromatin remodeling complex (npBAF complex) composed of at least, ARID1A/BAF250A or ARID1B/BAF250B, SMARCD1/BAF60A, SMARCD3/BAF60C, SMARCA2/BRM/BAF190B, SMARCA4/BRG1/BAF190A, SMARCB1/BAF47, SMARCC1/BAF155, SMARCE1/BAF57, SMARCC2/BAF170, PHF10/BAF45A, ACTL6A/BAF53A and actin. Component of neuron-specific chromatin remodeling complex (nBAF complex) composed of at least, ARID1A/BAF250A or ARID1B/BAF250B, SMARCD1/BAF60A, SMARCD3/BAF60C, SMARCA2/BRM/BAF190B, SMARCA4/BRG1/BAF190A, SMARCB1/BAF47, SMARCC1/BAF155, SMARCE1/BAF57, SMARCC2/BAF170, DPF1/BAF45B, DPF3/BAF45C, ACTL6B/BAF53B and actin. Component of the SWI/SNF-B (PBAF) chromatin remodeling complex, at least composed of SMARCA4/BRG1, SMARCB1/BAF47/SNF5, ACTL6A/BAF53A or ACTL6B/BAF53B, SMARCE1/BAF57, SMARCD1/BAF60A, SMARCD2/BAF60B, perhaps SMARCD3/BAF60C, SMARCC1/BAF155, SMARCC2/BAF170, PBRM1/BAF180, ARID2/BAF200 and actin. Component of SWI/SNF (GBAF) subcomplex, which includes at least BICRA or BICRAL (mutually exclusive), BRD9, SS18, SMARCA2/BRM, SMARCA4/BRG1/BAF190A, ACTL6A/BAF53, SMARCC1/BAF155, and SMARCD1/BAF60A. May also interact with the SIN3A histone deacetylase transcription repressor complex in conjunction with SMARCA2 and SMARCA4. The minimal complex composed of SMARCC1 and SMARCA4 seems to be able to associate with cyclin such as CCNE1 or transcription factors such as KLF1 or GATA1. Interacts with NR3C1 and SMARD1. Interacts with TRIP12; leading to disrupt interaction between TRIP12 and SMARCE1 and prevent SMARCE1 ubiquitination. Interacts with CEBPB (when not methylated). Interacts with KDM6B. Interacts with MKKS; the interaction takes place predominantly in the cytoplasm and may modulate SMARCC1 location. Interacts with DPF2. Interacts with PRDM1/BLIMP1. Interacts with DPF3a (isoform 2 of DPF3/BAF45C) and with HDGFL2 in a DPF3a-dependent manner. As to expression, highly expressed in adult brain, testis and thymus.

The protein resides in the nucleus. It is found in the cytoplasm. Involved in transcriptional activation and repression of select genes by chromatin remodeling (alteration of DNA-nucleosome topology). Component of SWI/SNF chromatin remodeling complexes that carry out key enzymatic activities, changing chromatin structure by altering DNA-histone contacts within a nucleosome in an ATP-dependent manner. May stimulate the ATPase activity of the catalytic subunit of the complex. Belongs to the neural progenitors-specific chromatin remodeling complex (npBAF complex) and the neuron-specific chromatin remodeling complex (nBAF complex). During neural development a switch from a stem/progenitor to a postmitotic chromatin remodeling mechanism occurs as neurons exit the cell cycle and become committed to their adult state. The transition from proliferating neural stem/progenitor cells to postmitotic neurons requires a switch in subunit composition of the npBAF and nBAF complexes. As neural progenitors exit mitosis and differentiate into neurons, npBAF complexes which contain ACTL6A/BAF53A and PHF10/BAF45A, are exchanged for homologous alternative ACTL6B/BAF53B and DPF1/BAF45B or DPF3/BAF45C subunits in neuron-specific complexes (nBAF). The npBAF complex is essential for the self-renewal/proliferative capacity of the multipotent neural stem cells. The nBAF complex along with CREST plays a role regulating the activity of genes essential for dendrite growth. In Mus musculus (Mouse), this protein is SWI/SNF complex subunit SMARCC1 (Smarcc1).